We begin with the raw amino-acid sequence, 314 residues long: tRNA dimethylallyltransferase (314 aa).

Position 12 to 19 (12 to 19 (GPTASGKT)) interacts with ATP. 14–19 (TASGKT) contributes to the substrate binding site. Interaction with substrate tRNA regions lie at residues 37 to 40 (DSAL) and 162 to 166 (QRIIR).

It belongs to the IPP transferase family. Monomer. It depends on Mg(2+) as a cofactor.

The catalysed reaction is adenosine(37) in tRNA + dimethylallyl diphosphate = N(6)-dimethylallyladenosine(37) in tRNA + diphosphate. Its function is as follows. Catalyzes the transfer of a dimethylallyl group onto the adenine at position 37 in tRNAs that read codons beginning with uridine, leading to the formation of N6-(dimethylallyl)adenosine (i(6)A). In Acinetobacter baumannii (strain AB0057), this protein is tRNA dimethylallyltransferase.